A 195-amino-acid polypeptide reads, in one-letter code: Segregation and condensation protein B (195 aa).

A disordered region spans residues 169-195 (LEDVAASQENSREAGGRGSIPGHPGEE).

Belongs to the ScpB family. As to quaternary structure, homodimer. Homodimerization may be required to stabilize the binding of ScpA to the Smc head domains. Component of a cohesin-like complex composed of ScpA, ScpB and the Smc homodimer, in which ScpA and ScpB bind to the head domain of Smc. The presence of the three proteins is required for the association of the complex with DNA.

It is found in the cytoplasm. In terms of biological role, participates in chromosomal partition during cell division. May act via the formation of a condensin-like complex containing Smc and ScpA that pull DNA away from mid-cell into both cell halves. The chain is Segregation and condensation protein B from Moorella thermoacetica (strain ATCC 39073 / JCM 9320).